Reading from the N-terminus, the 75-residue chain is Conotoxin VnMKLT2-012 (75 aa).

A signal peptide spans 1–23 (MMKLTCVLIIAVLFLTACQLTTA). Positions 24 to 45 (ETRDEYRAVRSSDEVRNSRSTR) are excised as a propeptide. Over residues 31-45 (AVRSSDEVRNSRSTR) the composition is skewed to basic and acidic residues. The interval 31 to 50 (AVRSSDEVRNSRSTRDCSGS) is disordered. 3 disulfides stabilise this stretch: cysteine 47–cysteine 60, cysteine 54–cysteine 65, and cysteine 59–cysteine 74.

The protein belongs to the conotoxin O1 superfamily. As to expression, expressed by the venom duct.

The protein resides in the secreted. The chain is Conotoxin VnMKLT2-012 from Conus ventricosus (Mediterranean cone).